The sequence spans 132 residues: CDGSH iron-sulfur domain-containing protein 2 homolog (132 aa).

Residues 1–35 lie on the Lumenal side of the membrane; the sequence is MEPISHVVKSSLPNYLSSLPIPDSFGGWFKLSFKD. A helical membrane pass occupies residues 36–58; sequence WLALIPPTVVVAGLGYTTYLAFC. Residues 59–132 lie on the Cytoplasmic side of the membrane; the sequence is PAARCAGKDS…NVGPVVVKKK (74 aa). [2Fe-2S] cluster contacts are provided by cysteine 98, cysteine 100, cysteine 109, and histidine 113.

The protein belongs to the CISD protein family. CISD2 subfamily. [2Fe-2S] cluster serves as cofactor.

Its subcellular location is the endoplasmic reticulum membrane. This chain is CDGSH iron-sulfur domain-containing protein 2 homolog, found in Drosophila persimilis (Fruit fly).